A 71-amino-acid polypeptide reads, in one-letter code: Small ribosomal subunit protein bS21 (71 aa).

This sequence belongs to the bacterial ribosomal protein bS21 family.

The polypeptide is Small ribosomal subunit protein bS21 (Blochmanniella floridana).